Here is a 262-residue protein sequence, read N- to C-terminus: Adenosine deaminase RL5 (262 aa).

Positions 36, 40, 68, 73, 75, 114, 118, 135, 172, 175, 234, and 237 each coordinate Cu cation.

The protein belongs to the purine nucleoside phosphorylase YfiH/LACC1 family. In terms of assembly, homodimer. Cu cation serves as cofactor.

The enzyme catalyses adenosine + phosphate = alpha-D-ribose 1-phosphate + adenine. The catalysed reaction is S-methyl-5'-thioadenosine + phosphate = 5-(methylsulfanyl)-alpha-D-ribose 1-phosphate + adenine. It catalyses the reaction inosine + phosphate = alpha-D-ribose 1-phosphate + hypoxanthine. It carries out the reaction adenosine + H2O + H(+) = inosine + NH4(+). Functionally, purine nucleoside enzyme that catalyzes the phosphorolysis of adenosine and inosine nucleosides, yielding D-ribose 1-phosphate and the respective free bases, adenine and hypoxanthine. Also catalyzes the phosphorolysis of S-methyl-5'-thioadenosine into adenine and S-methyl-5-thio-alpha-D-ribose 1-phosphate. Also has adenosine deaminase activity. Also acts as a multicopper oxidase able to oxidize a wide variety of polyphenols and related compounds in vitro. Displays substrate preference as follows: syringaldazine &gt; 2,6-dimethoxyphenol &gt; veratryl alcohol &gt; guaiacol &gt; tetramethylbenzidine &gt; 4-methoxybenzyl alcohol &gt; 2,2'-azino-bis(3-ethylbenzthiazoline-6-sulfonic acid) (ABTS) &gt;&gt; phenol red &gt; 1-hydroxybenzotriazole. Cannot use 3,4-dimetoxybenzyl alcohol and violuric acid as substrates. As this enzyme is derived from a rumen microbial community, it may have a role in the digestion of complex plant materials such as ryegrass lignin. The polypeptide is Adenosine deaminase RL5 (Unknown prokaryotic organism).